We begin with the raw amino-acid sequence, 851 residues long: DNA mismatch repair protein MutS (851 aa).

An ATP-binding site is contributed by 602–609 (GPNMSGKS).

This sequence belongs to the DNA mismatch repair MutS family.

In terms of biological role, this protein is involved in the repair of mismatches in DNA. It is possible that it carries out the mismatch recognition step. This protein has a weak ATPase activity. The protein is DNA mismatch repair protein MutS of Streptococcus pyogenes serotype M6 (strain ATCC BAA-946 / MGAS10394).